An 84-amino-acid polypeptide reads, in one-letter code: MAESDAAAPAKAKPAALRKGALVKVNRAAYSSSLEAGASDPTAPDYIFEGPGELLVVKGDYGQVRWNRPVPDVWLRMDQLEACS.

It belongs to the complex I NdhO subunit family. NDH-1 can be composed of about 15 different subunits; different subcomplexes with different compositions have been identified which probably have different functions.

Its subcellular location is the cellular thylakoid membrane. The catalysed reaction is a plastoquinone + NADH + (n+1) H(+)(in) = a plastoquinol + NAD(+) + n H(+)(out). It carries out the reaction a plastoquinone + NADPH + (n+1) H(+)(in) = a plastoquinol + NADP(+) + n H(+)(out). NDH-1 shuttles electrons from an unknown electron donor, via FMN and iron-sulfur (Fe-S) centers, to quinones in the respiratory and/or the photosynthetic chain. The immediate electron acceptor for the enzyme in this species is believed to be plastoquinone. Couples the redox reaction to proton translocation, and thus conserves the redox energy in a proton gradient. Cyanobacterial NDH-1 also plays a role in inorganic carbon-concentration. In Synechococcus sp. (strain CC9605), this protein is NAD(P)H-quinone oxidoreductase subunit O.